Reading from the N-terminus, the 239-residue chain is Ribosomal RNA large subunit methyltransferase E (239 aa).

Residues 1 to 20 (MTKAPIAGNRTGRKLGQRVK) are disordered. Over residues 11–20 (TGRKLGQRVK) the composition is skewed to basic residues. 5 residues coordinate S-adenosyl-L-methionine: Gly81, Trp83, Asp104, Asp120, and Asp144. Catalysis depends on Lys184, which acts as the Proton acceptor.

It belongs to the class I-like SAM-binding methyltransferase superfamily. RNA methyltransferase RlmE family.

It is found in the cytoplasm. The enzyme catalyses uridine(2552) in 23S rRNA + S-adenosyl-L-methionine = 2'-O-methyluridine(2552) in 23S rRNA + S-adenosyl-L-homocysteine + H(+). Functionally, specifically methylates the uridine in position 2552 of 23S rRNA at the 2'-O position of the ribose in the fully assembled 50S ribosomal subunit. The chain is Ribosomal RNA large subunit methyltransferase E from Rhizobium leguminosarum bv. trifolii (strain WSM2304).